The chain runs to 257 residues: Flap endonuclease Xni (257 aa).

Asp112 provides a ligand contact to Mg(2+). Residues 169–256 (EQKKLVEFWA…LGFSLKQLRL (88 aa)) form the 5'-3' exonuclease domain. 5 residues coordinate K(+): Phe179, Ala180, Pro188, Val190, and Ile193. An interaction with DNA region spans residues 192–197 (GIGTKS).

It belongs to the Xni family. Mg(2+) is required as a cofactor. It depends on K(+) as a cofactor.

Has flap endonuclease activity. During DNA replication, flap endonucleases cleave the 5'-overhanging flap structure that is generated by displacement synthesis when DNA polymerase encounters the 5'-end of a downstream Okazaki fragment. The chain is Flap endonuclease Xni from Pseudoalteromonas translucida (strain TAC 125).